The following is an 887-amino-acid chain: Transcriptional regulator DEF1 (887 aa).

Positions 1-13 (MERRQFNTSNIRN) are enriched in polar residues. Disordered stretches follow at residues 1-117 (MERR…IQPG), 203-293 (KRSL…ESNA), 311-330 (NNETNNTGESNSTSQQPRQL), 350-542 (PVLG…QQAQ), 555-578 (NRPPSQQRQYSQTPQYNQPPPQQK), 614-675 (QAPQ…QVPK), 696-758 (QRTL…TQEQ), and 813-887 (NNAN…NLLN). Residues 57–75 (SSSQSNSVQNQDQSEDQSQ) are compositionally biased toward low complexity. A compositionally biased stretch (polar residues) spans 76–107 (LPQQESNTQQESNTQQESNTPSPRASNTSTET). A coiled-coil region spans residues 199 to 234 (EEMRKRSLENSRKRELEEAQEREESNKRQHTESSAE). The segment covering 203–231 (KRSLENSRKRELEEAQEREESNKRQHTES) has biased composition (basic and acidic residues). Positions 232–254 (SAEPNAESSTESTTESNAESGAE) are enriched in low complexity. Polar residues predominate over residues 261–270 (AESTTESNVE). Residues 311–326 (NNETNNTGESNSTSQQ) are compositionally biased toward low complexity. Over residues 364 to 393 (KTSLTGSQNKVHSTNTQQSQKHPQQILTNS) the composition is skewed to polar residues. Composition is skewed to low complexity over residues 399-408 (QQYSAQSQQQ), 428-456 (QQQQKQPSVPTSSVPLQVSQKQNQQQQEL), 475-519 (QQQS…QVQT), and 526-542 (QPQTQLSQQQQQQQQAQ). A compositionally biased stretch (low complexity) spans 622 to 640 (YQHHYQQVQQRQNQQPYMQ). Polar residues predominate over residues 641–658 (SAPTYQQPHVQTPKSTRS). Over residues 696–710 (QRTLDNGREPERLRT) the composition is skewed to basic and acidic residues. The segment covering 729-745 (RSKQSSNQKPVVKQQSS) has biased composition (polar residues). Positions 829–844 (TNTRGGRASTRSSGRP) are enriched in low complexity. The segment covering 865 to 887 (TDGSQSQNSGKASKISNIRNLLN) has biased composition (polar residues).

It localises to the nucleus. In terms of biological role, transcriptional regulator involved in extension of germ tubes into elongated hyphae and maintenance of filamentous growth. Regulates expression of UME6. Acts in a pathway that regulates maintenance of hyphal growth by repressing hyphal-to-yeast transition and allows dissemination within host epithelial tissues. Dispensable for invasion into both host oral epithelial cells and enterocytes, but required for epithelial damage. This Candida albicans (strain SC5314 / ATCC MYA-2876) (Yeast) protein is Transcriptional regulator DEF1 (DEF1).